The following is a 429-amino-acid chain: S-adenosylmethionine synthase (429 aa).

Residue His14 coordinates ATP. Residue Asp16 coordinates Mg(2+). Residue Glu42 coordinates K(+). L-methionine is bound by residues Glu55 and Gln98. Residues 98 to 108 form a flexible loop region; the sequence is QSADINRGVDR. ATP-binding positions include 165-167, 252-253, Asp261, 267-268, Ala284, and Lys288; these read DAK, KF, and RK. Position 261 (Asp261) interacts with L-methionine. Lys292 contributes to the L-methionine binding site.

The protein belongs to the AdoMet synthase family. Homotetramer; dimer of dimers. Mg(2+) serves as cofactor. The cofactor is K(+).

It is found in the cytoplasm. The enzyme catalyses L-methionine + ATP + H2O = S-adenosyl-L-methionine + phosphate + diphosphate. Its pathway is amino-acid biosynthesis; S-adenosyl-L-methionine biosynthesis; S-adenosyl-L-methionine from L-methionine: step 1/1. Its function is as follows. Catalyzes the formation of S-adenosylmethionine (AdoMet) from methionine and ATP. The overall synthetic reaction is composed of two sequential steps, AdoMet formation and the subsequent tripolyphosphate hydrolysis which occurs prior to release of AdoMet from the enzyme. The sequence is that of S-adenosylmethionine synthase from Porphyromonas gingivalis (strain ATCC BAA-308 / W83).